A 144-amino-acid chain; its full sequence is Large ribosomal subunit protein uL13 (144 aa).

It belongs to the universal ribosomal protein uL13 family. As to quaternary structure, part of the 50S ribosomal subunit.

This protein is one of the early assembly proteins of the 50S ribosomal subunit, although it is not seen to bind rRNA by itself. It is important during the early stages of 50S assembly. The chain is Large ribosomal subunit protein uL13 from Clostridium acetobutylicum (strain ATCC 824 / DSM 792 / JCM 1419 / IAM 19013 / LMG 5710 / NBRC 13948 / NRRL B-527 / VKM B-1787 / 2291 / W).